Here is a 304-residue protein sequence, read N- to C-terminus: tRNA pseudouridine synthase B (304 aa).

Catalysis depends on Asp38, which acts as the Nucleophile.

The protein belongs to the pseudouridine synthase TruB family. Type 1 subfamily.

The enzyme catalyses uridine(55) in tRNA = pseudouridine(55) in tRNA. In terms of biological role, responsible for synthesis of pseudouridine from uracil-55 in the psi GC loop of transfer RNAs. The sequence is that of tRNA pseudouridine synthase B from Listeria monocytogenes serovar 1/2a (strain ATCC BAA-679 / EGD-e).